The chain runs to 131 residues: Protein GLUTAMINE DUMPER 5 (131 aa).

The Extracellular segment spans residues Met1–Tyr34. Residues Leu35–Cys55 traverse the membrane as a helical segment. The Cytoplasmic portion of the chain corresponds to Ser56–His131. The short motif at Val88–Gly92 is the VIMAG element.

Belongs to the GLUTAMINE DUMPER 1 (TC 9.B.60) family. In terms of tissue distribution, expressed in the vascular tissues. Also detected in guard cells.

Its subcellular location is the membrane. Probable subunit of an amino acid transporter involved in the regulation of the amino acid metabolism. Stimulates amino acid export by activating nonselective amino acid facilitators. This is Protein GLUTAMINE DUMPER 5 (GDU5) from Arabidopsis thaliana (Mouse-ear cress).